We begin with the raw amino-acid sequence, 343 residues long: Endoglucanase C (343 aa).

The active-site Proton donor is the Glu-140. Catalysis depends on Glu-280, which acts as the Nucleophile.

This sequence belongs to the glycosyl hydrolase 5 (cellulase A) family.

It carries out the reaction Endohydrolysis of (1-&gt;4)-beta-D-glucosidic linkages in cellulose, lichenin and cereal beta-D-glucans.. Its pathway is glycan metabolism; cellulose degradation. This enzyme catalyzes the endohydrolysis of 1,4-beta-glucosidic linkages in cellulose, lichenin and cereal beta-D-glucans. In Acetivibrio thermocellus (Hungateiclostridium thermocellum), this protein is Endoglucanase C (celC).